We begin with the raw amino-acid sequence, 180 residues long: MSKLEELDIVSNNILILKKFYTNDEWKNKLDSLIDRIIKAKKIFIFGVGRSGYIGRCFAMRLMHLGFKSYFVGETTTPSYEKDDLLILISGSGRTESVLTVAKKAKNINNNIIAIVCECGNVVEFADLTIPLEVKKSKYLPMGTTFEETALIFLDLVIAEIMKRLNLDESEIIKRHCNLL.

One can recognise an SIS domain in the interval 33–167; the sequence is LIDRIIKAKK…IAEIMKRLNL (135 aa). Residues S51 and 90 to 95 contribute to the substrate site; that span reads SGSGRT. The active-site Proton acceptor is the E147.

It belongs to the SIS family. PHI subfamily. In terms of assembly, homotetramer.

It catalyses the reaction D-arabino-hex-3-ulose 6-phosphate = beta-D-fructose 6-phosphate. It functions in the pathway carbohydrate biosynthesis; D-ribose 5-phosphate biosynthesis. Catalyzes the isomerization between 3-hexulose 6-phosphate and fructose 6-phosphate. This chain is 3-hexulose-6-phosphate isomerase (phi), found in Methanocaldococcus jannaschii (strain ATCC 43067 / DSM 2661 / JAL-1 / JCM 10045 / NBRC 100440) (Methanococcus jannaschii).